We begin with the raw amino-acid sequence, 225 residues long: Membrane protein (225 aa).

The Virion surface segment spans residues 1 to 20; it reads MPNETNCTLDFEQSVQLFKE. Residues 21-41 traverse the membrane as a helical segment; the sequence is YNLFITAFLLFLTIILQYGYA. The Intravirion portion of the chain corresponds to 42–51; that stretch reads TRTKVIYTLK. The chain crosses the membrane as a helical span at residues 52 to 72; it reads MIVLWCFWPLNIAVGVISCTY. Residues 73 to 77 are Virion surface-facing; the sequence is PPNTG. A helical membrane pass occupies residues 78-98; it reads GLVVAIILTVFACLSFVGYWI. At 99–225 the chain is on the intravirion side; the sequence is QSIRLFKRCR…VATGGSSLYT (127 aa).

It belongs to the gammacoronaviruses M protein family. In terms of assembly, homomultimer. Interacts with envelope E protein in the budding compartment of the host cell, which is located between endoplasmic reticulum and the Golgi complex. Forms a complex with HE and S proteins. Interacts with nucleocapsid N protein. This interaction probably participates in RNA packaging into the virus.

The protein localises to the virion membrane. Its subcellular location is the host Golgi apparatus membrane. Component of the viral envelope that plays a central role in virus morphogenesis and assembly via its interactions with other viral proteins. This is Membrane protein from Avian infectious bronchitis virus (strain Beaudette US) (IBV).